The sequence spans 296 residues: uncharacterized protein (296 aa).

The N-terminal 57 residues, Met-1 to Val-57, are a transit peptide targeting the chloroplast.

Belongs to the NAD(P)-dependent epimerase/dehydratase family.

It localises to the plastid. It is found in the chloroplast. The protein resides in the plastoglobule. This is an uncharacterized protein from Arabidopsis thaliana (Mouse-ear cress).